The sequence spans 201 residues: Ras-related protein RabA (201 aa).

15 to 22 provides a ligand contact to GTP; sequence GDSGVGKS. Positions 37–45 match the Effector region motif; the sequence is YISTIGVDF. GTP contacts are provided by residues 63–67 and 121–124; these read DTAGQ and NKSD. Cysteine 198 carries the post-translational modification Cysteine methyl ester. Residue cysteine 198 is the site of S-geranylgeranyl cysteine attachment. A propeptide spans 199–201 (removed in mature form); it reads IIN.

This sequence belongs to the small GTPase superfamily. Rab family.

It is found in the cell membrane. This is Ras-related protein RabA (rabA) from Dictyostelium discoideum (Social amoeba).